A 920-amino-acid polypeptide reads, in one-letter code: Translation initiation factor IF-2 (920 aa).

Residues 33 to 305 form a disordered region; the sequence is KSASSTVEAP…RGRKSKRAKR (273 aa). Low complexity predominate over residues 53-86; sequence SKSAPAPAKSAGNGATAAPATSATPATAAAAAAP. Composition is skewed to pro residues over residues 87 to 159, 179 to 193, and 201 to 212; these read APAP…PAPR, PRPQ…PGTP, and NMPPRPAGPRPG. The segment covering 225-291 has biased composition (gly residues); that stretch reads PGGRGPGGGG…GAAGAFGRPG (67 aa). A compositionally biased stretch (basic residues) spans 295–304; it reads KRGRKSKRAK. Residues 416–588 enclose the tr-type G domain; the sequence is IRPPVVTVMG…VLLTADASLD (173 aa). Residues 425–432 form a G1 region; sequence GHVDHGKT. 425 to 432 is a GTP binding site; that stretch reads GHVDHGKT. The tract at residues 450 to 454 is G2; it reads GITQH. Positions 475–478 are G3; sequence DTPG. Residues 475–479 and 529–532 each bind GTP; these read DTPGH and NKID. The tract at residues 529 to 532 is G4; it reads NKID. Residues 565–567 are G5; that stretch reads SAK.

The protein belongs to the TRAFAC class translation factor GTPase superfamily. Classic translation factor GTPase family. IF-2 subfamily.

It is found in the cytoplasm. Its function is as follows. One of the essential components for the initiation of protein synthesis. Protects formylmethionyl-tRNA from spontaneous hydrolysis and promotes its binding to the 30S ribosomal subunits. Also involved in the hydrolysis of GTP during the formation of the 70S ribosomal complex. This Mycobacterium sp. (strain JLS) protein is Translation initiation factor IF-2.